A 635-amino-acid chain; its full sequence is Glutamine sensor PIB2 (635 aa).

Residues 1–110 (MTALHSVSKT…GTGFVDRKQQ (110 aa)) are disordered. The may play a role in attenuating TORC1 signaling stretch occupies residues 1–164 (MTALHSVSKT…KTLPFTDDQR (164 aa)). Positions 33–44 (RNHDYRGRKGDE) are enriched in basic and acidic residues. Phosphoserine is present on residues S46 and S53. A Phosphothreonine modification is found at T56. The span at 67–85 (STHSEQSILSSISLKSMVN) shows a compositional bias: polar residues. Phosphoserine is present on residues S73, S113, S124, S148, S165, and S174. Disordered stretches follow at residues 123 to 181 (NSAE…VSRG) and 224 to 254 (SSNL…TSKV). Low complexity predominate over residues 238-254 (SSSSSTSSVSSSSTSKV). Residues S300, S309, and S381 each carry the phosphoserine modification. A required for interaction with TORC1 region spans residues 304 to 440 (LPQPASSTNL…PTISNRNSAR (137 aa)). The FYVE-type; atypical zinc-finger motif lies at 452–527 (DSKRNSCRYC…ICDDCLVEYE (76 aa)). Zn(2+) contacts are provided by C458, C461, C474, C477, C482, H485, C519, and C522. Disordered stretches follow at residues 534-557 (HNAN…DNRK) and 570-623 (ALFR…GSVI). Composition is skewed to acidic residues over residues 543–553 (INVEEGEDDDN) and 601–616 (EEAD…EEGN). Residues 620 to 635 (GSVIGSVPANWNWSSF) are may be required for TORC1 activation.

As to quaternary structure, interacts with the TORC1 complex when activated by glutamine or cysteine. Interacts with TOR1; glutamine enhances the interaction. Interacts with KOG1; glutamine enhances the interaction. Interacts with TCO89. Interacts with LST8; glutamine enhances the interaction. Interacts with TOR2; glutamine enhances the interaction.

Its subcellular location is the vacuole membrane. With respect to regulation, activated by glutamine. May also be activated by cysteine. Functionally, functions as an intracellular glutamine sensor that directly activates the TORC1 signaling pathway, to promote cell growth when glutamine is available. May play a role in repressing NPR1 activity independently of TORC1 signaling. In Saccharomyces cerevisiae (strain ATCC 204508 / S288c) (Baker's yeast), this protein is Glutamine sensor PIB2.